A 93-amino-acid chain; its full sequence is Small ribosomal subunit protein uS19 (93 aa).

The protein belongs to the universal ribosomal protein uS19 family.

Functionally, protein S19 forms a complex with S13 that binds strongly to the 16S ribosomal RNA. The chain is Small ribosomal subunit protein uS19 from Syntrophus aciditrophicus (strain SB).